Consider the following 879-residue polypeptide: Alanine--tRNA ligase (879 aa).

Zn(2+)-binding residues include histidine 566, histidine 570, cysteine 668, and histidine 672.

The protein belongs to the class-II aminoacyl-tRNA synthetase family. Requires Zn(2+) as cofactor.

The protein localises to the cytoplasm. The enzyme catalyses tRNA(Ala) + L-alanine + ATP = L-alanyl-tRNA(Ala) + AMP + diphosphate. Functionally, catalyzes the attachment of alanine to tRNA(Ala) in a two-step reaction: alanine is first activated by ATP to form Ala-AMP and then transferred to the acceptor end of tRNA(Ala). Also edits incorrectly charged Ser-tRNA(Ala) and Gly-tRNA(Ala) via its editing domain. The protein is Alanine--tRNA ligase of Listeria innocua serovar 6a (strain ATCC BAA-680 / CLIP 11262).